The sequence spans 206 residues: N-(5'-phosphoribosyl)anthranilate isomerase (206 aa).

The protein belongs to the TrpF family.

The catalysed reaction is N-(5-phospho-beta-D-ribosyl)anthranilate = 1-(2-carboxyphenylamino)-1-deoxy-D-ribulose 5-phosphate. It functions in the pathway amino-acid biosynthesis; L-tryptophan biosynthesis; L-tryptophan from chorismate: step 3/5. This chain is N-(5'-phosphoribosyl)anthranilate isomerase, found in Pseudomonas syringae pv. tomato (strain ATCC BAA-871 / DC3000).